The following is a 476-amino-acid chain: Lactate utilization protein B (476 aa).

2 4Fe-4S ferredoxin-type domains span residues 304 to 334 (GGEF…GHTY) and 353 to 382 (YDDF…LHQL). Residues cysteine 313, cysteine 316, cysteine 319, cysteine 323, cysteine 366, cysteine 369, and cysteine 373 each contribute to the [4Fe-4S] cluster site. The segment at 452–476 (RDFPAPNKNSFRNWMKHRTKGDEES) is disordered.

The protein belongs to the LutB/YkgF family.

Functionally, is involved in L-lactate degradation and allows cells to grow with lactate as the sole carbon source. Has probably a role as an electron transporter during oxidation of L-lactate. The sequence is that of Lactate utilization protein B from Lysinibacillus sphaericus (strain C3-41).